The following is an 878-amino-acid chain: Pyruvate dehydrogenase phosphatase regulatory subunit, mitochondrial (878 aa).

Residues 1–93 constitute a mitochondrion transit peptide; sequence MLYRLLSIVQ…CAGILSTARH (93 aa).

This sequence belongs to the GcvT family. Heterodimer of a catalytic (PDP1) and a regulatory (PDPR) subunit.

It localises to the mitochondrion matrix. In terms of biological role, decreases the sensitivity of PDP1 to magnesium ions, and this inhibition is reversed by the polyamine spermine. In Mus musculus (Mouse), this protein is Pyruvate dehydrogenase phosphatase regulatory subunit, mitochondrial (Pdpr).